The following is a 432-amino-acid chain: Glutamyl-tRNA reductase (432 aa).

Residues 49–52, S107, 112–114, and Q118 each bind substrate; these read TCNR and ETQ. Residue C50 is the Nucleophile of the active site. Position 186 to 191 (186 to 191) interacts with NADP(+); that stretch reads GAGEMG.

It belongs to the glutamyl-tRNA reductase family. As to quaternary structure, homodimer.

The catalysed reaction is (S)-4-amino-5-oxopentanoate + tRNA(Glu) + NADP(+) = L-glutamyl-tRNA(Glu) + NADPH + H(+). Its pathway is porphyrin-containing compound metabolism; protoporphyrin-IX biosynthesis; 5-aminolevulinate from L-glutamyl-tRNA(Glu): step 1/2. Catalyzes the NADPH-dependent reduction of glutamyl-tRNA(Glu) to glutamate 1-semialdehyde (GSA). This Campylobacter jejuni subsp. doylei (strain ATCC BAA-1458 / RM4099 / 269.97) protein is Glutamyl-tRNA reductase.